The chain runs to 517 residues: ATP synthase subunit alpha (517 aa).

An ATP-binding site is contributed by glycine 174–threonine 181.

The protein belongs to the ATPase alpha/beta chains family. As to quaternary structure, F-type ATPases have 2 components, CF(1) - the catalytic core - and CF(0) - the membrane proton channel. CF(1) has five subunits: alpha(3), beta(3), gamma(1), delta(1), epsilon(1). CF(0) has three main subunits: a(1), b(2) and c(9-12). The alpha and beta chains form an alternating ring which encloses part of the gamma chain. CF(1) is attached to CF(0) by a central stalk formed by the gamma and epsilon chains, while a peripheral stalk is formed by the delta and b chains.

The protein resides in the cell inner membrane. The catalysed reaction is ATP + H2O + 4 H(+)(in) = ADP + phosphate + 5 H(+)(out). Produces ATP from ADP in the presence of a proton gradient across the membrane. The alpha chain is a regulatory subunit. The chain is ATP synthase subunit alpha from Polaromonas sp. (strain JS666 / ATCC BAA-500).